The sequence spans 206 residues: MAANKNKNQSSLVLHKVIMVGSGGVGKSALTLQFMYDEFVEDYEPTKADSYRKKVVLDGEEVQIDILDTAGQEDYAAIRDNYFRSGEGFLLVFSITEHESFTATAEFREQILRVKAEEDKIPLLVVGNKSDLEDRRQVPMDEARGKAEEWGVQYVETSAKTRANVDKVFFDLMREVRTKKMSENKDKNGKKSGKSKKGFKQRCCLL.

21-28 (GSGGVGKS) is a GTP binding site. An Effector region motif is present at residues 43–51 (YEPTKADSY). Residues 68 to 72 (DTAGQ) and 128 to 131 (NKSD) contribute to the GTP site. Basic and acidic residues predominate over residues 180–189 (KMSENKDKNG). The disordered stretch occupies residues 180–206 (KMSENKDKNGKKSGKSKKGFKQRCCLL). The segment covering 190–200 (KKSGKSKKGFK) has biased composition (basic residues). The residue at position 203 (C203) is a Cysteine methyl ester. C203 carries the S-geranylgeranyl cysteine lipid modification. The propeptide at 204–206 (CLL) is removed in mature form.

The protein belongs to the small GTPase superfamily. Ras family. As to quaternary structure, interacts with ralbp1 and rap1gds1.

It localises to the cell membrane. The protein resides in the midbody. It catalyses the reaction GTP + H2O = GDP + phosphate + H(+). Multifunctional GTPase involved in a variety of cellular processes including gene expression, cell migration, cell proliferation, oncogenic transformation and membrane trafficking. Accomplishes its multiple functions by interacting with distinct downstream effectors. Acts as a GTP sensor for GTP-dependent exocytosis of dense core vesicles. Required both to stabilize the assembly of the exocyst complex and to localize functional exocyst complexes to the leading edge of migrating cells. Required for suppression of apoptosis. In late stages of cytokinesis, upon completion of the bridge formation between dividing cells, mediates exocyst recruitment to the midbody to drive abscission. Regulates the actin cytoskeleton to play a role in gastrulation or neurulation. During the cleavage stages, the GTP-bound form induces a cortical reaction that affects the localization of pigment granules. Activated by the FGF pathway via ras and ral-GDS, but independently of raf. Directs ralbp1 to the plasma membrane. Involved in ligand-dependent receptor mediated endocytosis of the EGF and insulin receptors. This Xenopus laevis (African clawed frog) protein is Ras-related protein ralB-B (ralb-b).